A 776-amino-acid polypeptide reads, in one-letter code: Peregrinol diphosphate synthase CPS1, chloroplastic (776 aa).

Residues 1–17 constitute a chloroplast transit peptide; sequence MASTPTLNLSITTPFVR. Lys-238 lines the substrate pocket. Mg(2+) contacts are provided by Asp-371 and Asp-373. A DXDD motif motif is present at residues 371–374; it reads DIDD. Residue Lys-457 participates in substrate binding.

This sequence belongs to the terpene synthase family. Requires Mg(2+) as cofactor. As to expression, present in both leaves and flowers, with higher levels in leaves.

The protein resides in the plastid. Its subcellular location is the chloroplast. It carries out the reaction peregrinol diphosphate = (2E,6E,10E)-geranylgeranyl diphosphate + H2O. Its pathway is secondary metabolite biosynthesis; terpenoid biosynthesis. Its function is as follows. Involved in the biosynthesis of labdane-type diterpenoid including marrubiin and other labdane-related furanoid diterpenoids with potential applications as anti-diabetics, analgesics or vasorelaxants. Terpene synthase that produces peregrinol diphosphate from geranylgeranyl diphosphate (GGPP). The chain is Peregrinol diphosphate synthase CPS1, chloroplastic from Marrubium vulgare (White horehound).